We begin with the raw amino-acid sequence, 483 residues long: Altronate oxidoreductase (483 aa).

18–29 (IIQFGEGNFLRA) contacts NAD(+).

This sequence belongs to the mannitol dehydrogenase family. UxaB subfamily.

The catalysed reaction is D-altronate + NAD(+) = keto-D-tagaturonate + NADH + H(+). Its pathway is carbohydrate metabolism; pentose and glucuronate interconversion. The polypeptide is Altronate oxidoreductase (Shigella flexneri serotype 5b (strain 8401)).